A 310-amino-acid polypeptide reads, in one-letter code: MDDDIFKEARKERDDFEELMNACDLAKMSVKNNEMVHGLETFGINGESSENGNKEKPKEIMKVVAPTVEAYVGSSSAQTPTKSSGGALDGSDQQEVRQDGTSVQKDDNGFVFYKCRFCGLTFNFMNTLRAHERIHDVSQPYVCGKCGDSFEFACQLEYHAAQHSEIDGYKCECGRTFFSYTEMLYHKHTDDPLELIGAPETTTIKVSKKRVLPVSEQDLPQPAFVTEGYEPKHPLRVYNDVRSKPYICEYCSKSYSDSRGLAYHMYSHRGEKYFNPRASRYMMGREGVGYTDSRSYYLFPRTSGYVTPRF.

The segment covering 73–84 (GSSSAQTPTKSS) has biased composition (polar residues). The disordered stretch occupies residues 73 to 102 (GSSSAQTPTKSSGGALDGSDQQEVRQDGTS). C2H2-type zinc fingers lie at residues 113 to 135 (YKCR…ERIH) and 141 to 163 (YVCG…AAQH). The C2H2-type 3; degenerate zinc finger occupies 169-188 (YKCECGRTFFSYTEMLYHKH). Residues 198-310 (APETTTIKVS…RTSGYVTPRF (113 aa)) form an interaction with myo-3 region. The segment at 246–268 (YICEYCSKSYSDSRGLAYHMYSH) adopts a C2H2-type 4 zinc-finger fold.

As to quaternary structure, interacts with hum-6, mep-1, myo-3, unc-96 and unc-97/PINCH. Expressed in embryos from 1.5- to 2-fold stage in myofibrils. In larvae and adults, it is expressed in body wall muscle, and in addition, anal depressor muscle and vulval muscles. More specifically it is found in the thick filaments of muscle fibers.

It localises to the nucleus. It is found in the cytoplasm. Probable transcription factor required for muscle structure. Its dual subcellular localization suggests that it may function both as a muscle adhesion complex protein and as a transcription factor, or work together with transcription factors, to influence gene expression. Thought to act as a molecular bridge between unc-97 and myo-3 at the M-line of muscles, possibly in a signaling role. Plays a role in the formation of muscle connections, also called muscle arm extensions, between the body wall and the motor axons in the dorsal and ventral cord. In Caenorhabditis elegans, this protein is Zinc finger protein unc-98 (unc-98).